The following is a 133-amino-acid chain: Small ribosomal subunit protein uS8c (133 aa).

This sequence belongs to the universal ribosomal protein uS8 family. In terms of assembly, part of the 30S ribosomal subunit.

The protein resides in the plastid. Its subcellular location is the chloroplast. Its function is as follows. One of the primary rRNA binding proteins, it binds directly to 16S rRNA central domain where it helps coordinate assembly of the platform of the 30S subunit. This Pyropia yezoensis (Susabi-nori) protein is Small ribosomal subunit protein uS8c (rps8).